Here is a 93-residue protein sequence, read N- to C-terminus: Large ribosomal subunit protein uL23cy (93 aa).

It belongs to the universal ribosomal protein uL23 family. Part of the 50S ribosomal subunit.

It is found in the plastid. It localises to the chloroplast. Functionally, binds to 23S rRNA. The protein is Large ribosomal subunit protein uL23cy (rpl23-B) of Agrostis stolonifera (Creeping bentgrass).